Here is a 668-residue protein sequence, read N- to C-terminus: tRNA 5-methylaminomethyl-2-thiouridine biosynthesis bifunctional protein MnmC (668 aa).

Residues 1 to 245 (MKHYSIQPAN…KREMLCGVME (245 aa)) form a tRNA (mnm(5)s(2)U34)-methyltransferase region. The interval 270–668 (IGGGIASALL…LLKGKAVKAG (399 aa)) is FAD-dependent cmnm(5)s(2)U34 oxidoreductase.

It in the N-terminal section; belongs to the methyltransferase superfamily. tRNA (mnm(5)s(2)U34)-methyltransferase family. The protein in the C-terminal section; belongs to the DAO family. The cofactor is FAD.

Its subcellular location is the cytoplasm. The catalysed reaction is 5-aminomethyl-2-thiouridine(34) in tRNA + S-adenosyl-L-methionine = 5-methylaminomethyl-2-thiouridine(34) in tRNA + S-adenosyl-L-homocysteine + H(+). Its function is as follows. Catalyzes the last two steps in the biosynthesis of 5-methylaminomethyl-2-thiouridine (mnm(5)s(2)U) at the wobble position (U34) in tRNA. Catalyzes the FAD-dependent demodification of cmnm(5)s(2)U34 to nm(5)s(2)U34, followed by the transfer of a methyl group from S-adenosyl-L-methionine to nm(5)s(2)U34, to form mnm(5)s(2)U34. The polypeptide is tRNA 5-methylaminomethyl-2-thiouridine biosynthesis bifunctional protein MnmC (Escherichia coli O9:H4 (strain HS)).